Consider the following 508-residue polypeptide: Probable glycine dehydrogenase (decarboxylating) subunit 2 (508 aa).

Lys-277 bears the N6-(pyridoxal phosphate)lysine mark.

Belongs to the GcvP family. C-terminal subunit subfamily. In terms of assembly, the glycine cleavage system is composed of four proteins: P, T, L and H. In this organism, the P 'protein' is a heterodimer of two subunits. Requires pyridoxal 5'-phosphate as cofactor.

It catalyses the reaction N(6)-[(R)-lipoyl]-L-lysyl-[glycine-cleavage complex H protein] + glycine + H(+) = N(6)-[(R)-S(8)-aminomethyldihydrolipoyl]-L-lysyl-[glycine-cleavage complex H protein] + CO2. In terms of biological role, the glycine cleavage system catalyzes the degradation of glycine. The P protein binds the alpha-amino group of glycine through its pyridoxal phosphate cofactor; CO(2) is released and the remaining methylamine moiety is then transferred to the lipoamide cofactor of the H protein. The sequence is that of Probable glycine dehydrogenase (decarboxylating) subunit 2 from Saccharolobus solfataricus (strain ATCC 35092 / DSM 1617 / JCM 11322 / P2) (Sulfolobus solfataricus).